Reading from the N-terminus, the 1142-residue chain is DNA-directed RNA polymerase subunit beta N-terminal section (1142 aa).

This sequence belongs to the RNA polymerase beta chain family. In terms of assembly, in plastids the minimal PEP RNA polymerase catalytic core is composed of four subunits: alpha, beta, beta', and beta''. When a (nuclear-encoded) sigma factor is associated with the core the holoenzyme is formed, which can initiate transcription.

The protein localises to the plastid. The protein resides in the chloroplast. It catalyses the reaction RNA(n) + a ribonucleoside 5'-triphosphate = RNA(n+1) + diphosphate. In terms of biological role, DNA-dependent RNA polymerase catalyzes the transcription of DNA into RNA using the four ribonucleoside triphosphates as substrates. The protein is DNA-directed RNA polymerase subunit beta N-terminal section (rpoB1) of Pleurastrum terricola (Filamentous green alga).